A 394-amino-acid polypeptide reads, in one-letter code: ATP phosphoribosyltransferase regulatory subunit (394 aa).

This sequence belongs to the class-II aminoacyl-tRNA synthetase family. HisZ subfamily. As to quaternary structure, heteromultimer composed of HisG and HisZ subunits.

It localises to the cytoplasm. Its pathway is amino-acid biosynthesis; L-histidine biosynthesis; L-histidine from 5-phospho-alpha-D-ribose 1-diphosphate: step 1/9. Its function is as follows. Required for the first step of histidine biosynthesis. May allow the feedback regulation of ATP phosphoribosyltransferase activity by histidine. In Pseudomonas paraeruginosa (strain DSM 24068 / PA7) (Pseudomonas aeruginosa (strain PA7)), this protein is ATP phosphoribosyltransferase regulatory subunit.